A 233-amino-acid polypeptide reads, in one-letter code: Superoxide dismutase [Mn] 3.3, mitochondrial (233 aa).

A mitochondrion-targeting transit peptide spans 1–29 (MALRTLASKNALSFALGGAARPSAESARG). Residues His-57, His-105, Asp-194, and His-198 each coordinate Mn(2+).

The protein belongs to the iron/manganese superoxide dismutase family. In terms of assembly, homotetramer. Mn(2+) serves as cofactor. As to expression, predominantly expressed in the embryo late in embryogenesis.

It localises to the mitochondrion matrix. The enzyme catalyses 2 superoxide + 2 H(+) = H2O2 + O2. In terms of biological role, destroys superoxide anion radicals which are normally produced within the cells and which are toxic to biological systems. In Zea mays (Maize), this protein is Superoxide dismutase [Mn] 3.3, mitochondrial (SODA.2).